We begin with the raw amino-acid sequence, 363 residues long: tRNA dimethylallyltransferase (363 aa).

65–72 provides a ligand contact to ATP; sequence GPTASGKS. Residue 67-72 participates in substrate binding; it reads TASGKS. 2 interaction with substrate tRNA regions span residues 90–93 and 214–218; these read DSMQ and QRLIR.

Belongs to the IPP transferase family. As to quaternary structure, monomer. Mg(2+) is required as a cofactor.

The enzyme catalyses adenosine(37) in tRNA + dimethylallyl diphosphate = N(6)-dimethylallyladenosine(37) in tRNA + diphosphate. In terms of biological role, catalyzes the transfer of a dimethylallyl group onto the adenine at position 37 in tRNAs that read codons beginning with uridine, leading to the formation of N6-(dimethylallyl)adenosine (i(6)A). The protein is tRNA dimethylallyltransferase of Rickettsia massiliae (strain Mtu5).